A 156-amino-acid chain; its full sequence is Small ribosomal subunit protein uS7 (156 aa).

It belongs to the universal ribosomal protein uS7 family. As to quaternary structure, part of the 30S ribosomal subunit. Contacts proteins S9 and S11.

Its function is as follows. One of the primary rRNA binding proteins, it binds directly to 16S rRNA where it nucleates assembly of the head domain of the 30S subunit. Is located at the subunit interface close to the decoding center, probably blocks exit of the E-site tRNA. This Vibrio cholerae serotype O1 (strain ATCC 39315 / El Tor Inaba N16961) protein is Small ribosomal subunit protein uS7.